The chain runs to 119 residues: Large ribosomal subunit protein bL20 (119 aa).

This sequence belongs to the bacterial ribosomal protein bL20 family.

Binds directly to 23S ribosomal RNA and is necessary for the in vitro assembly process of the 50S ribosomal subunit. It is not involved in the protein synthesizing functions of that subunit. This Xanthomonas oryzae pv. oryzae (strain PXO99A) protein is Large ribosomal subunit protein bL20.